We begin with the raw amino-acid sequence, 647 residues long: RalBP1-associated Eps domain-containing protein 2 (647 aa).

Positions 21 to 122 (EQQCYSELFA…RTESIKCELP (102 aa)) constitute an EH 1 domain. The disordered stretch occupies residues 156–233 (EKNSFKRMDN…PSSEGPGAKP (78 aa)). A compositionally biased stretch (basic and acidic residues) spans 158-170 (NSFKRMDNEDKQE). The span at 221–230 (PEGPSSEGPG) shows a compositional bias: low complexity. Phosphoserine is present on serine 239. Residues 268–359 (QREYYVNQFR…LQPEYLQAAF (92 aa)) enclose the EH 2 domain. The 36-residue stretch at 301–336 (LSIPELSYIWELSDADCDGALTLSEFCAAFHLIVAR) folds into the EF-hand domain. Positions 314, 316, 318, and 325 each coordinate Ca(2+). Residues 402–478 (PTQDVTTADD…PRPQKTHSRA (77 aa)) form a disordered region. Threonine 466 is modified (phosphothreonine). Serine 480 carries the phosphoserine modification. Residues 492–568 (PAANSGLLPP…PENQTTESQE (77 aa)) form a disordered region. Residues 499–510 (LPPPPALPPRPC) show a composition bias toward pro residues. The interval 501–647 (PPPALPPRPC…LEQLRPVTVL (147 aa)) is interaction with RALBP1. Residues 524 to 539 (SQLNRAPSQAAESSPT) show a composition bias toward polar residues. Residues 548–647 (PPSKPIRRKF…LEQLRPVTVL (100 aa)) form an interaction with ASAP1 region. Residues 599-640 (IQTAIRKNKEANAVLARLNSELQQQLKEVHQERIALENQLEQ) adopt a coiled-coil conformation.

As to quaternary structure, interacts with EPN1. Interacts with EPS15 AND EPS15L1. Interacts with RALBP1; can form a ternary complex with activated Ral (RALA or RALB). Interacts with ASAP1; the interaction is direct and this complex can bind paxillin. Also forms a ternary complex with RALBP1 and ASAP1. Interacts with GRB2. Post-translationally, tyrosine-phosphorylated upon stimulation of cells with EGF. Phosphorylation on Tyr-residues induces its association with the EGF receptor probably indirectly through an adapter like GRB2.

It is found in the cytoplasm. Its function is as follows. Involved in ligand-dependent receptor mediated endocytosis of the EGF and insulin receptors as part of the Ral signaling pathway. By controlling growth factor receptors endocytosis may regulate cell survival. Through ASAP1 may regulate cell adhesion and migration. The polypeptide is RalBP1-associated Eps domain-containing protein 2 (Reps2) (Mus musculus (Mouse)).